A 125-amino-acid polypeptide reads, in one-letter code: Photosystem II extrinsic protein U (125 aa).

The signal sequence occupies residues 1 to 29 (MKRLLSWLTGLVVMAGLLFSLATPSGVQA).

This sequence belongs to the PsbU family. PSII is composed of 1 copy each of membrane proteins PsbA, PsbB, PsbC, PsbD, PsbE, PsbF, PsbH, PsbI, PsbJ, PsbK, PsbL, PsbM, PsbT, PsbX, PsbY, PsbZ, Psb30/Ycf12, peripheral proteins PsbO, CyanoQ (PsbQ), PsbU, PsbV and a large number of cofactors. It forms dimeric complexes.

Its subcellular location is the cellular thylakoid membrane. In terms of biological role, one of the extrinsic, lumenal subunits of photosystem II (PSII). PSII is a light-driven water plastoquinone oxidoreductase, using light energy to abstract electrons from H(2)O, generating a proton gradient subsequently used for ATP formation. The extrinsic proteins stabilize the structure of photosystem II oxygen-evolving complex (OEC), the ion environment of oxygen evolution and protect the OEC against heat-induced inactivation. The chain is Photosystem II extrinsic protein U from Synechococcus sp. (strain WH7803).